The following is a 377-amino-acid chain: Lactosylceramide 1,3-N-acetyl-beta-D-glucosaminyltransferase (377 aa).

Over 1-12 the chain is Cytoplasmic; it reads MLISARRLRRCQ. A helical; Signal-anchor for type II membrane protein transmembrane segment spans residues 13 to 30; sequence FFQLLTSCFVLSLMALLV. Residues 31-377 are Lumenal-facing; sequence QEDNSLINHV…DTYPCSAAWS (347 aa). Residues asparagine 56, asparagine 167, and asparagine 275 are each glycosylated (N-linked (GlcNAc...) asparagine).

Belongs to the glycosyltransferase 31 family.

It is found in the golgi apparatus membrane. The catalysed reaction is a beta-D-Gal-(1-&gt;4)-beta-D-Glc-(1&lt;-&gt;1)-Cer(d18:1(4E)) + UDP-N-acetyl-alpha-D-glucosamine = a beta-D-GlcNAc-(1-&gt;3)-beta-D-Gal-(1-&gt;4)-beta-D-Glc-(1&lt;-&gt;1)-Cer(d18:1(4E)) + UDP + H(+). It catalyses the reaction a neolactoside nLc4Cer(d18:1(4E)) + UDP-N-acetyl-alpha-D-glucosamine = a neolactoside IV(3)-beta-GlcNAc-nLc4Cer(d18:1(4E)) + UDP + H(+). The protein operates within protein modification; protein glycosylation. Functionally, beta-1,3-N-acetylglucosaminyltransferase that plays a key role in the synthesis of lacto- or neolacto-series carbohydrate chains on glycolipids. The sequence is that of Lactosylceramide 1,3-N-acetyl-beta-D-glucosaminyltransferase (b3gnt5) from Xenopus tropicalis (Western clawed frog).